The following is a 346-amino-acid chain: Nitrilase 1 (346 aa).

Residue Ser-2 is modified to N-acetylserine. Residues Val-25–Leu-297 enclose the CN hydrolase domain. Residue Glu-65 is the Proton acceptor of the active site. Residue Lys-152 is the Proton donor of the active site. Residue Cys-186 is the Nucleophile of the active site.

Belongs to the carbon-nitrogen hydrolase superfamily. Nitrilase family. As to quaternary structure, interacts with DEK3. As to expression, expressed in cotyledons, hypocotyls, leaves, roots, stems, flowers and siliques.

The enzyme catalyses a nitrile + 2 H2O = a carboxylate + NH4(+). Functionally, can convert indole-3-acetonitrile to the plant hormone indole-3-acetic acid. In Arabidopsis thaliana (Mouse-ear cress), this protein is Nitrilase 1.